Here is a 322-residue protein sequence, read N- to C-terminus: Homeobox protein DBX1-B (322 aa).

A DNA-binding region (homeobox) is located at residues 179-238 (GMLRRAVFSDVQRKALEKMFQKQKYISKPDRKKLATKLGLKDSQVKIWFQNRRMKWRNSK). 2 disordered regions span residues 238-266 (KERE…LSDV) and 296-322 (DLHF…ITVS). The span at 312–322 (SESEDEEITVS) shows a compositional bias: acidic residues.

Belongs to the H2.0 homeobox family.

Its subcellular location is the nucleus. The chain is Homeobox protein DBX1-B (dbx1b) from Danio rerio (Zebrafish).